The primary structure comprises 186 residues: Elongation factor P (186 aa).

It belongs to the elongation factor P family.

The protein resides in the cytoplasm. Its pathway is protein biosynthesis; polypeptide chain elongation. Functionally, involved in peptide bond synthesis. Stimulates efficient translation and peptide-bond synthesis on native or reconstituted 70S ribosomes in vitro. Probably functions indirectly by altering the affinity of the ribosome for aminoacyl-tRNA, thus increasing their reactivity as acceptors for peptidyl transferase. The polypeptide is Elongation factor P (Neisseria meningitidis serogroup A / serotype 4A (strain DSM 15465 / Z2491)).